A 261-amino-acid polypeptide reads, in one-letter code: tRNA U34 carboxymethyltransferase (261 aa).

Carboxy-S-adenosyl-L-methionine-binding positions include lysine 25, tryptophan 39, lysine 44, glycine 63, 114–115, tyrosine 135, and arginine 250; that span reads VE.

This sequence belongs to the class I-like SAM-binding methyltransferase superfamily. CmoB family. As to quaternary structure, homotetramer.

The enzyme catalyses carboxy-S-adenosyl-L-methionine + 5-hydroxyuridine(34) in tRNA = 5-carboxymethoxyuridine(34) in tRNA + S-adenosyl-L-homocysteine + H(+). Its function is as follows. Catalyzes carboxymethyl transfer from carboxy-S-adenosyl-L-methionine (Cx-SAM) to 5-hydroxyuridine (ho5U) to form 5-carboxymethoxyuridine (cmo5U) at position 34 in tRNAs. This is tRNA U34 carboxymethyltransferase from Helicobacter pylori (strain P12).